Consider the following 195-residue polypeptide: Small ribosomal subunit protein uS4 (195 aa).

The 61-residue stretch at 92-152 folds into the S4 RNA-binding domain; it reads SRLDNIVYRL…EKHKHKANKN (61 aa).

It belongs to the universal ribosomal protein uS4 family. In terms of assembly, part of the 30S ribosomal subunit. Contacts protein S5. The interaction surface between S4 and S5 is involved in control of translational fidelity.

Its function is as follows. One of the primary rRNA binding proteins, it binds directly to 16S rRNA where it nucleates assembly of the body of the 30S subunit. Functionally, with S5 and S12 plays an important role in translational accuracy. This is Small ribosomal subunit protein uS4 from Karelsulcia muelleri (strain GWSS) (Sulcia muelleri).